Reading from the N-terminus, the 719-residue chain is Putative ankyrin repeat protein RBE_0319 (719 aa).

ANK repeat units follow at residues 377–406 (VAEE…EISS), 408–438 (TLIK…NINE), 442–472 (NGGT…EVNK), 476–506 (YGFT…EINQ), 510–540 (YQTT…KFNE), 544–572 (LGYT…DINQ), 576–605 (DGYT…NVNE), 609–639 (HGLT…EVSE), and 642–672 (QYGT…NLNK).

The sequence is that of Putative ankyrin repeat protein RBE_0319 from Rickettsia bellii (strain RML369-C).